Reading from the N-terminus, the 439-residue chain is IAA-amino acid hydrolase ILR1-like 2 (439 aa).

Residues 1–21 form the signal peptide; it reads MALNKLLSLTFQLLLFLLSVS. Mn(2+) contacts are provided by C137, H139, E173, H197, and H397. Positions 436-439 match the Prevents secretion from ER motif; sequence HEEL.

It belongs to the peptidase M20 family. Monomer. It depends on Mn(2+) as a cofactor. As to expression, expressed in leaves, stems, siliques, seeds and flowers. Detected in the distal tips of cotyledons and seedling leaves, hydathodes of leaves from mature plants, pollen, ovules and developing seeds.

The protein localises to the endoplasmic reticulum lumen. Functionally, hydrolyzes certain amino acid conjugates of the plant growth regulator indole-3-acetic acid (IAA), including IAA-Ala, IAA-Leu, IAA-Met, IAA-Phe, IAA-Ser, IAA-Thr, IAA-Tyr and IAA-Val. Is the most efficient enzyme of the ILL family for IAA-Ala. Not important for IAA-Leu hydrolysis in roots. May act with ILR1 to provide free IAA to germinating seedlings. This is IAA-amino acid hydrolase ILR1-like 2 from Arabidopsis thaliana (Mouse-ear cress).